Here is a 202-residue protein sequence, read N- to C-terminus: Securin-2 (202 aa).

Residues 60 to 105 are disordered; it reads TRKALGTVNRATEKSVKTNGPRKQKQPSFSAKKMTEKTVKTKSSVP. Positions 61 to 64 match the D-box motif; it reads RKAL. Residues 163–173 carry the SH3-binding motif; that stretch reads PPSPVKMPSPP.

It belongs to the securin family. In terms of tissue distribution, expressed at low levels in the pituitary, liver, spleen, prostate, testis, ovary, small intestine and colon. Also expressed in various pituitary, testicular, liver and ovarian tumors.

The protein localises to the cytoplasm. It localises to the nucleus. The polypeptide is Securin-2 (PTTG2) (Homo sapiens (Human)).